We begin with the raw amino-acid sequence, 297 residues long: uncharacterized protein (297 aa).

Disordered regions lie at residues Q12–N43, V65–I85, K122–T151, and S265–N297. A compositionally biased stretch (polar residues) spans V65–K79. Over residues K122–K135 the composition is skewed to low complexity. A compositionally biased stretch (polar residues) spans Q140 to T151. A compositionally biased stretch (low complexity) spans S268–N287.

This is an uncharacterized protein from Dictyostelium discoideum (Social amoeba).